Reading from the N-terminus, the 76-residue chain is Small ribosomal subunit protein bS18 (76 aa).

It belongs to the bacterial ribosomal protein bS18 family. Part of the 30S ribosomal subunit. Forms a tight heterodimer with protein bS6.

Functionally, binds as a heterodimer with protein bS6 to the central domain of the 16S rRNA, where it helps stabilize the platform of the 30S subunit. In Neisseria gonorrhoeae (strain ATCC 700825 / FA 1090), this protein is Small ribosomal subunit protein bS18.